The primary structure comprises 521 residues: GMP synthase [glutamine-hydrolyzing] (521 aa).

Residues 8-203 (KILILDFGAQ…VVDVCGCQTL (196 aa)) form the Glutamine amidotransferase type-1 domain. Cys85 acts as the Nucleophile in catalysis. Active-site residues include His177 and Glu179. The GMPS ATP-PPase domain maps to 204 to 396 (WTAANIIEDQ…LGLPRTMVYR (193 aa)). Position 231-237 (231-237 (SGGVDSS)) interacts with ATP.

In terms of assembly, homodimer.

It catalyses the reaction XMP + L-glutamine + ATP + H2O = GMP + L-glutamate + AMP + diphosphate + 2 H(+). The protein operates within purine metabolism; GMP biosynthesis; GMP from XMP (L-Gln route): step 1/1. Its function is as follows. Catalyzes the synthesis of GMP from XMP. This Xanthomonas axonopodis pv. citri (strain 306) protein is GMP synthase [glutamine-hydrolyzing].